The primary structure comprises 108 residues: UPF0145 protein ACIAD2946 (108 aa).

Belongs to the UPF0145 family.

This chain is UPF0145 protein ACIAD2946, found in Acinetobacter baylyi (strain ATCC 33305 / BD413 / ADP1).